The primary structure comprises 275 residues: MQQIQRDIAQALQVQPPFQSEADVQAQIARRIAFIQQCLKDAGLKTLVLGISGGVDSLTAGLLAQRAVEQLREQTGDQAYRFIAVRLPYQVQQDEADAQASLATIRADEEQTVNIGPSVKALAEQLEALEGLEPAKSDFVIGNIKARIRMVAQYAIAGARGGLVIGTDHAAEAVMGFFTKFGDGACDLAPLSGLAKHQVRALARALGAPENLVEKIPTADLEDLRPGHPDEASHGVTYAEIDAFLHGQPLREEAARVIVDTYHKTQHKRELPKAP.

50-57 (GISGGVDS) is a binding site for ATP. Asp-56 contacts Mg(2+). Arg-147 contacts deamido-NAD(+). Thr-167 contributes to the ATP binding site. A Mg(2+)-binding site is contributed by Glu-172. 2 residues coordinate deamido-NAD(+): Lys-180 and Asp-187. 2 residues coordinate ATP: Lys-196 and Thr-218. 267-268 (HK) provides a ligand contact to deamido-NAD(+).

Belongs to the NAD synthetase family. As to quaternary structure, homodimer.

The catalysed reaction is deamido-NAD(+) + NH4(+) + ATP = AMP + diphosphate + NAD(+) + H(+). The protein operates within cofactor biosynthesis; NAD(+) biosynthesis; NAD(+) from deamido-NAD(+) (ammonia route): step 1/1. Catalyzes the ATP-dependent amidation of deamido-NAD to form NAD. Uses ammonia as a nitrogen source. The sequence is that of NH(3)-dependent NAD(+) synthetase from Pseudomonas aeruginosa (strain UCBPP-PA14).